The chain runs to 64 residues: Neurotoxin BmK-II (64 aa).

The LCN-type CS-alpha/beta domain occupies 2–64; that stretch reads RDAYIAKPHN…VPIRIPGNCH (63 aa). Cystine bridges form between Cys-12–Cys-63, Cys-16–Cys-36, Cys-22–Cys-46, and Cys-26–Cys-48.

Belongs to the long (4 C-C) scorpion toxin superfamily. Sodium channel inhibitor family. Alpha subfamily. Expressed by the venom gland.

It is found in the secreted. Binds to sodium channels (Nav) and inhibits the inactivation of the activated channels, thereby blocking neuronal transmission. This toxin is active against mammals and insects. BmK-II is 6-fold less toxic than BmK-I. The polypeptide is Neurotoxin BmK-II (Olivierus martensii (Manchurian scorpion)).